A 394-amino-acid polypeptide reads, in one-letter code: Elongation factor Tu (394 aa).

Positions lysine 10–arginine 205 constitute a tr-type G domain. Residues glycine 19–threonine 26 are G1. Glycine 19 to threonine 26 contacts GTP. Position 26 (threonine 26) interacts with Mg(2+). Residues glycine 60–asparagine 64 form a G2 region. Residues aspartate 81–glycine 84 form a G3 region. Residues aspartate 81–histidine 85 and asparagine 136–aspartate 139 each bind GTP. The G4 stretch occupies residues asparagine 136–aspartate 139. The segment at serine 174 to leucine 176 is G5.

This sequence belongs to the TRAFAC class translation factor GTPase superfamily. Classic translation factor GTPase family. EF-Tu/EF-1A subfamily. As to quaternary structure, monomer.

It localises to the cytoplasm. It carries out the reaction GTP + H2O = GDP + phosphate + H(+). Its function is as follows. GTP hydrolase that promotes the GTP-dependent binding of aminoacyl-tRNA to the A-site of ribosomes during protein biosynthesis. This Phocaeicola vulgatus (strain ATCC 8482 / DSM 1447 / JCM 5826 / CCUG 4940 / NBRC 14291 / NCTC 11154) (Bacteroides vulgatus) protein is Elongation factor Tu.